The following is a 794-amino-acid chain: Protein SPA1-RELATED 4 (794 aa).

The Protein kinase domain occupies 1–268 (MKGSSESSSR…MSELLQSEFI (268 aa)). The interval 126 to 165 (SCSDSGSDEDATTKSREIGSSRQEEILSERRSKQQEEVKK) is disordered. Residues 136-165 (ATTKSREIGSSRQEEILSERRSKQQEEVKK) are compositionally biased toward basic and acidic residues. Residues 272 to 326 (RENLEEREAAMELRDRIEEQELLLEFLFLIQQRKQEAADKLQDTISLLSSDIDQV) are a coiled coil. Disordered regions lie at residues 352-373 (QGAETTAAEEENDDNSIDEESK) and 428-447 (GRSSEKSSMSQPSKDPINDS). The segment covering 358–369 (AAEEENDDNSID) has biased composition (acidic residues). 7 WD repeats span residues 482-521 (NSSNLVCAIGFDRDGEFFATAGVNKKIKIFECESIIKDGR), 531-571 (ASRS…LVTE), 574-614 (EHEK…SIGT), 616-656 (KTKA…LPLC), 660-698 (GHHKTVSYVRFVDSSTLVSSSTDNTLKLWDLSMSISGIN), 707-746 (GHTNVKNFVGLSVSDGYIATGSETNEVFVYHKAFPMPVLS), and 762-794 (DASQFISSVCWRGQSSTLVAANSTGNIKILEMV). The short motif at 635–649 (AFGSADHKVYYYDLR) is the DWD box element.

In terms of assembly, interacts with COP1 and CO. Binds to CRY1 in response to blue light, this interaction prevents SPA1/COP1 complex formation and thus avoid COP1-dependent degradation of the transcription factor HY5 by the proteasome and promotes hypocotyl elongation.

It localises to the nucleus. Its function is as follows. Repressor of photomorphogenesis in the light. Probably part of the COP1/SPA E3 ubiquitin-protein ligase complex. This Arabidopsis thaliana (Mouse-ear cress) protein is Protein SPA1-RELATED 4 (SPA4).